The sequence spans 602 residues: GTP-binding protein 2 (602 aa).

The segment at 16-64 is disordered; the sequence is GGGPAVGGTLKARGAGSSSGCGGPKGKKKNGRNRGGKANNPPYLPPEAE. Positions 40 to 50 are enriched in basic residues; sequence KGKKKNGRNRG. In terms of domain architecture, tr-type G spans 170–398; it reads FLDLRVAVLG…LNILPPLTNS (229 aa). GTP contacts are provided by residues 179 to 186, 260 to 264, and 316 to 319; these read GNVDSGKS, DLAGH, and SKID.

Belongs to the TRAFAC class translation factor GTPase superfamily. Classic translation factor GTPase family. GTPBP1 subfamily. In terms of tissue distribution, predominantly expressed in thymus, spleen, and testis. Expressed at lower levels in brain, lung, kidney, and ovary.

The sequence is that of GTP-binding protein 2 from Homo sapiens (Human).